Reading from the N-terminus, the 890-residue chain is Translation initiation factor IF-2 (890 aa).

The tract at residues 45–304 (LIDHLNQKNS…LQQGFQKPAQ (260 aa)) is disordered. The span at 67 to 81 (STLNIPGTGGKSKSV) shows a compositional bias: polar residues. Positions 92 to 217 (VKRDPQEAER…RMAEENKWTD (126 aa)) are enriched in basic and acidic residues. The span at 252–266 (GRGRNAKAARPKKGN) shows a compositional bias: basic residues. Residues 267-280 (KHAESKADREEARA) show a composition bias toward basic and acidic residues. The tr-type G domain maps to 389-558 (PRAPVVTIMG…LLQAEVLELK (170 aa)). The segment at 398–405 (GHVDHGKT) is G1. Residue 398–405 (GHVDHGKT) coordinates GTP. The segment at 423-427 (GITQH) is G2. Residues 444–447 (DTPG) form a G3 region. GTP is bound by residues 444–448 (DTPGH) and 498–501 (NKID). Positions 498-501 (NKID) are G4. Residues 534 to 536 (SAK) form a G5 region. Position 808 is an N6-acetyllysine (Lys-808).

The protein belongs to the TRAFAC class translation factor GTPase superfamily. Classic translation factor GTPase family. IF-2 subfamily.

It is found in the cytoplasm. Its function is as follows. One of the essential components for the initiation of protein synthesis. Protects formylmethionyl-tRNA from spontaneous hydrolysis and promotes its binding to the 30S ribosomal subunits. Also involved in the hydrolysis of GTP during the formation of the 70S ribosomal complex. This Escherichia coli (strain SMS-3-5 / SECEC) protein is Translation initiation factor IF-2.